The primary structure comprises 570 residues: MGNWAVNEGLSIFVILVWLGLNVFLFVWYYRVYDIPPKFFYTRKLLGSALALARAPAACLNFNCMLILLPVCRNLLSFLRGSSACCSTRVRRQLDRNLTFHKMVAWMIALHSAIHTIAHLFNVEWCVNARVNNSDPYSVALSELGDRQNESYLNFARKRIKNPEGGLYLAVTLLAGITGVVITLCLILIITSSTKTIRRSYFEVFWYTHHLFVIFFIGLAIHGAERIVRGQTAESLAVHNITVCEQKISEWGKIKECPIPQFAGNPPMTWKWIVGPMFLYLCERLVRFWRSQQKVVITKVVTHPFKTIELQMKKKGFKMEVGQYIFVKCPKVSKLEWHPFTLTSAPEEDFFSIHIRIVGDWTEGLFNACGCDKQEFQDAWKLPKIAVDGPFGTASEDVFSYEVVMLVGAGIGVTPFASILKSVWYKYCNNATNLKLKKIYFYWLCRDTHAFEWFADLLQLLESQMQERNNAGFLSYNIYLTGWDESQANHFAVHHDEEKDVITGLKQKTLYGRPNWDNEFKTIASQHPNTRIGVFLCGPEALAETLSKQSISNSESGPRGVHFIFNKENF.

Over 2–9 (GNWAVNEG) the chain is Cytoplasmic. Residues 10–36 (LSIFVILVWLGLNVFLFVWYYRVYDIP) form a helical membrane-spanning segment. Topologically, residues 37–46 (PKFFYTRKLL) are extracellular. A helical transmembrane segment spans residues 47–72 (GSALALARAPAACLNFNCMLILLPVC). Positions 54–286 (RAPAACLNFN…MFLYLCERLV (233 aa)) constitute a Ferric oxidoreductase domain. Residues 73–95 (RNLLSFLRGSSACCSTRVRRQLD) are Cytoplasmic-facing. The chain crosses the membrane as a helical span at residues 96–130 (RNLTFHKMVAWMIALHSAIHTIAHLFNVEWCVNAR). Heme b contacts are provided by H101 and H115. Residues 131–163 (VNNSDPYSVALSELGDRQNESYLNFARKRIKNP) are Extracellular-facing. N-linked (GlcNAc...) asparagine glycosylation is found at N132 and N149. K161 participates in a covalent cross-link: Glycyl lysine isopeptide (Lys-Gly) (interchain with G-Cter in ubiquitin). The helical transmembrane segment at 164–194 (EGGLYLAVTLLAGITGVVITLCLILIITSST) threads the bilayer. Topologically, residues 195–203 (KTIRRSYFE) are cytoplasmic. Residues R199 and S200 each coordinate FAD. The chain crosses the membrane as a helical span at residues 204-222 (VFWYTHHLFVIFFIGLAIH). The heme b site is built by W206, H209, H222, R226, and I227. Over 223-267 (GAERIVRGQTAESLAVHNITVCEQKISEWGKIKECPIPQFAGNPP) the chain is Extracellular. N-linked (GlcNAc...) asparagine glycosylation occurs at N240. Residue K255 forms a Glycyl lysine isopeptide (Lys-Gly) (interchain with G-Cter in ubiquitin) linkage. The heme b site is built by M268, Y280, and R287. The helical transmembrane segment at 268–285 (MTWKWIVGPMFLYLCERL) threads the bilayer. At 286–570 (VRFWRSQQKV…VHFIFNKENF (285 aa)) the chain is on the cytoplasmic side. An FAD-binding FR-type domain is found at 287 to 397 (RFWRSQQKVV…DGPFGTASED (111 aa)). Residues K294, K299, K306, K328, and K334 each participate in a glycyl lysine isopeptide (Lys-Gly) (interchain with G-Cter in ubiquitin) cross-link. FAD is bound by residues W337, H338, P339, T341, H354, R356, W361, and T362. K381 is covalently cross-linked (Glycyl lysine isopeptide (Lys-Gly) (interchain with G-Cter in ubiquitin)). I411, R446, and T481 together coordinate NADPH. Residue K506 forms a Glycyl lysine isopeptide (Lys-Gly) (interchain with G-Cter in ubiquitin) linkage. R513 contributes to the NADPH binding site. K567 participates in a covalent cross-link: Glycyl lysine isopeptide (Lys-Gly) (interchain with G-Cter in ubiquitin).

As to quaternary structure, component of the phagocyte NADPH oxidase core complex/cytochrome b558 complex, composed of CYBB (heavy chain (beta)) and CYBA (light chain (alpha)). Component of the phagocyte NADPH oxidase complex composed of an obligatory core heterodimer formed by the membrane proteins CYBA and CYBB and the cytosolic regulatory subunits NCF1/p47-phox, NCF2/p67-phox, NCF4/p40-phox and the small GTPase RAC1 or RAC2. Interacts with NCF1 (phosphorylated form). Interacts with NCF2; the interaction is enhanced in the presence of GBP7. Interacts with RAC2. Interacts with RAC1. Interacts with calprotectin (S100A8/9). Interacts with NRROS; the interaction is direct and impairs formation of a stable NADPH oxidase complex. Interacts with CYBC1; CYBC1 may act as a chaperone stabilizing Cytochrome b-245 heterodimer. The CYBA-CYBB complex interacts with GBP7. FAD is required as a cofactor. Post-translationally, glycosylated. In terms of processing, phosphorylated on Ser and Thr residues by PKC during neutrophils activation. Phosphorylation enhances the NADPH oxidase activity and stimulates its interaction with RAC2, NCF2/p67-phox, and NCF1/p47-phox. Undergoes 'Lys-48'-linked polyubiquitination, likely by RNF145, triggering endoplasmic reticulum-associated degradation. In terms of tissue distribution, detected in neutrophils (at protein level).

It is found in the cell membrane. The catalysed reaction is NADPH + 2 O2 = 2 superoxide + NADP(+) + H(+). Functionally, catalytic subunit of the phagocyte NADPH oxidase complex that mediates the transfer of electrons from cytosolic NADPH to O2 to produce the superoxide anion (O2(-)). In the activated complex, electrons are first transferred from NADPH to flavin adenine dinucleotide (FAD) and subsequently transferred via two heme molecules to molecular oxygen, producing superoxide through an outer-sphere reaction. Activation of the NADPH oxidase complex is initiated by the assembly of cytosolic subunits of the NADPH oxidase complex with the core NADPH oxidase complex to form a complex at the plasma membrane or phagosomal membrane. This activation process is initiated by phosphorylation dependent binding of the cytosolic NCF1/p47-phox subunit to the C-terminus of CYBA/p22-phox. NADPH oxidase complex assembly is impaired through interaction with NRROS. The chain is NADPH oxidase 2 from Homo sapiens (Human).